The sequence spans 147 residues: Ras-related protein RabK2 (147 aa).

GTP is bound by residues 11 to 15 and 63 to 66; these read NTHGS and TKSD. Residue Cys-145 is the site of S-geranylgeranyl cysteine attachment.

It belongs to the small GTPase superfamily. Rab family.

The protein resides in the cell membrane. The protein is Ras-related protein RabK2 (rabK2) of Dictyostelium discoideum (Social amoeba).